We begin with the raw amino-acid sequence, 484 residues long: MGKHTSEHKNHAQIVQLLQDGQYFFHKGLKAYKERNLKRASKLIQRAVHLEPEDSEMLSQLAVIYSEMGQYQESNDLLDYIMANLEAEMPECHYFKANNFAHLGLFQEAYKEAAAYSDADPDGEFAEENDSLLDLLDLGDDGIEDSLYDQDELLVKQDRAKSLLESGQLAEAVAALEEITTEYPELWSAYNNLALAYFYSGNVVKAKQTAYEVLSHNEGNLHALCNLLVFYYYEREDEKVAELSDQLSNVYPMLLEQRYKLGATLALVGRYEIGYKWLKSLYKTGFEGDDTFFYWLSCSAYFTGHTDFAETIWRKVESQYPGEDRPAPWIERREALPSSVEQRLAAYYISSTKGETEHLEAVIRSKRITAPFETHFVKLLLNGDSAAADVSEDALFAYQTVKLLEQAEKEEMKTEVMSCWVFHVIQQIRAAAPLKNEKGWAAAICYIWKEAHGKQDTKKDTAARFGISPATLTKYMKYIDDILE.

TPR repeat units lie at residues 21–54 (GQYFFHKGLKAYKERNLKRASKLIQRAVHLEPED), 55–88 (SEMLSQLAVIYSEMGQYQESNDLLDYIMANLEAE), and 187–220 (WSAYNNLALAYFYSGNVVKAKQTAYEVLSHNEGN).

This is TPR repeat-containing protein YvcD (yvcD) from Bacillus subtilis (strain 168).